The following is a 589-amino-acid chain: Mitogen-activated protein kinase 8 (589 aa).

The segment at Arg-18 to Asn-56 is disordered. 2 stretches are compositionally biased toward low complexity: residues Ser-20–Asn-34 and Asn-41–Asn-56. One can recognise a Protein kinase domain in the interval Tyr-104 to Phe-395. ATP-binding positions include Val-110–Val-118 and Lys-133. The active-site Proton acceptor is Asp-230. Thr-266 is modified (phosphothreonine). The TXY motif lies at Thr-266–Tyr-268. Tyr-268 bears the Phosphotyrosine mark. Thr-271 carries the post-translational modification Phosphothreonine. Positions Asn-474–Ser-589 are disordered.

The protein belongs to the protein kinase superfamily. CMGC Ser/Thr protein kinase family. MAP kinase subfamily. In terms of assembly, interacts with CAM3, CAM4 and CAM7 in an calcium-dependent manner. In terms of processing, dually phosphorylated on Thr-266 and Tyr-268, which activates the enzyme. Autophosphorylated. Ubiquitous.

The catalysed reaction is L-seryl-[protein] + ATP = O-phospho-L-seryl-[protein] + ADP + H(+). The enzyme catalyses L-threonyl-[protein] + ATP = O-phospho-L-threonyl-[protein] + ADP + H(+). Its activity is regulated as follows. Activated by threonine and tyrosine phosphorylation. Activated by two independent mechanisms, the binding of CAMs in a calcium-dependent manner and the phosphorylation by MAP kinase kinase MKK3. Activated in response to mechanical wounding, hydrogen peroxide and jasmonic acid (JA). Functionally, MKK3-MPK8 and CAMs-MPK8 modules negatively regulates ROS accumulation through controlling expression of the RBOHD gene during wounding. This chain is Mitogen-activated protein kinase 8 (MPK8), found in Arabidopsis thaliana (Mouse-ear cress).